The following is an 892-amino-acid chain: Translation initiation factor IF-2 (892 aa).

The tract at residues 88 to 305 (KKRTFVKRDP…SLQQGFQKPA (218 aa)) is disordered. Composition is skewed to basic and acidic residues over residues 93 to 159 (VKRD…KDKV) and 166 to 216 (DMTK…EENK). The segment covering 254-269 (GRGRNAKAARPAKKGK) has biased composition (basic residues). The span at 270-282 (HAESKADREEARA) shows a compositional bias: basic and acidic residues. Residues 391-560 (PRAPVVTIMG…LLQAEVLELK (170 aa)) form the tr-type G domain. Positions 400–407 (GHVDHGKT) are G1. 400-407 (GHVDHGKT) contributes to the GTP binding site. The tract at residues 425-429 (GITQH) is G2. The interval 446 to 449 (DTPG) is G3. GTP contacts are provided by residues 446-450 (DTPGH) and 500-503 (NKID). Residues 500–503 (NKID) are G4. Positions 536–538 (SAK) are G5.

It belongs to the TRAFAC class translation factor GTPase superfamily. Classic translation factor GTPase family. IF-2 subfamily.

The protein localises to the cytoplasm. One of the essential components for the initiation of protein synthesis. Protects formylmethionyl-tRNA from spontaneous hydrolysis and promotes its binding to the 30S ribosomal subunits. Also involved in the hydrolysis of GTP during the formation of the 70S ribosomal complex. The protein is Translation initiation factor IF-2 of Salmonella agona (strain SL483).